The chain runs to 284 residues: MSDKRQSSHVQSQRIPESFRENSKTELGACGWILVAASFFFVIITFPISIWICIKIVKEYERVIIFRLGRILQGGAKGPGLFFILPCTDSLIKVDMRTISFDIPPQEVLTKDSVTISVDGVVYYRVQNATLAVANITNADSATRLLAQTTLRNALGTKNLSQILSDREEIAHHMQSTLDDATDDWGIKVERVEIKDVKLPVQLQRAMAAEAEAAREARAKVIAAEGEMNASRALKEASMVITESPAALQLRYLQTLTTIAAEKNSTIVFPLPVDMLQGIMGSNH.

Topologically, residues 1–31 (MSDKRQSSHVQSQRIPESFRENSKTELGACG) are cytoplasmic. S18 carries the post-translational modification Phosphoserine. C30 is lipidated: S-palmitoyl cysteine. The stretch at 32 to 52 (WILVAASFFFVIITFPISIWI) is an intramembrane region. Topologically, residues 53–284 (CIKIVKEYER…MLQGIMGSNH (232 aa)) are cytoplasmic. The S-palmitoyl cysteine moiety is linked to residue C87. S161 and S244 each carry phosphoserine. Positions 265–273 (STIVFPLPV) are required for homooligomerization. Residues 267–269 (IVF) are required for lipid raft association. Positions 273–284 (VDMLQGIMGSNH) are interaction with LANCL1.

The protein belongs to the band 7/mec-2 family. Interacts with LANCL1. Interacts with SLC2A1. Interacts with SLC4A1; this interaction positively regulates SLC4A1 activity. Identified in large complexes with SLC40A1, SLC14A1, SLC29A1 and AQP1. Homodimer and higher order homooligomers. The homodimer is banana-shaped. Interacts with ASIC1, ASIC2 and ASIC3. Interacts with STOML1; may redistribute STOM from the plasma membrane to late endosomes. In terms of tissue distribution, expressed in all sensory neurons of the dorsal root ganglia. In the CNS, expressed in many neurons of the spinal cord, medulla and pons. Expressed only in scattered neurons in the cortex, hippocampus, thalamus and basal ganglia. In the cerebellum, expressed in all Purkinje cells (at protein level). Widely expressed with high levels in heart, liver, skeletal muscle and testis and low levels in lung, brain and spleen.

The protein resides in the cell membrane. Its subcellular location is the cytoplasm. It is found in the cytoskeleton. It localises to the membrane raft. The protein localises to the melanosome. The protein resides in the cytoplasmic vesicle. Functionally, regulates ion channel activity and transmembrane ion transport. Regulates ASIC2 and ASIC3 channel activity. In Mus musculus (Mouse), this protein is Stomatin.